The chain runs to 357 residues: Anthranilate phosphoribosyltransferase (357 aa).

5-phospho-alpha-D-ribose 1-diphosphate-binding positions include Gly91, 94 to 95, Thr99, 101 to 104, 119 to 127, and Ser131; these read GD, NIST, and KHGNRSVSS. Gly91 serves as a coordination point for anthranilate. Ser103 is a binding site for Mg(2+). Residue Asn122 coordinates anthranilate. Arg177 is a binding site for anthranilate. The Mg(2+) site is built by Asp235 and Glu236.

It belongs to the anthranilate phosphoribosyltransferase family. As to quaternary structure, homodimer. Requires Mg(2+) as cofactor.

The catalysed reaction is N-(5-phospho-beta-D-ribosyl)anthranilate + diphosphate = 5-phospho-alpha-D-ribose 1-diphosphate + anthranilate. The protein operates within amino-acid biosynthesis; L-tryptophan biosynthesis; L-tryptophan from chorismate: step 2/5. Functionally, catalyzes the transfer of the phosphoribosyl group of 5-phosphorylribose-1-pyrophosphate (PRPP) to anthranilate to yield N-(5'-phosphoribosyl)-anthranilate (PRA). The protein is Anthranilate phosphoribosyltransferase of Shewanella baltica (strain OS185).